The following is a 267-amino-acid chain: 3-methyl-2-oxobutanoate hydroxymethyltransferase (267 aa).

Residues aspartate 41 and aspartate 80 each coordinate Mg(2+). 3-methyl-2-oxobutanoate is bound by residues aspartate 41–serine 42, aspartate 80, and lysine 109. Glutamate 111 provides a ligand contact to Mg(2+). Glutamate 178 functions as the Proton acceptor in the catalytic mechanism.

It belongs to the PanB family. Homodecamer; pentamer of dimers. The cofactor is Mg(2+).

The protein localises to the cytoplasm. It catalyses the reaction 3-methyl-2-oxobutanoate + (6R)-5,10-methylene-5,6,7,8-tetrahydrofolate + H2O = 2-dehydropantoate + (6S)-5,6,7,8-tetrahydrofolate. The protein operates within cofactor biosynthesis; (R)-pantothenate biosynthesis; (R)-pantoate from 3-methyl-2-oxobutanoate: step 1/2. Catalyzes the reversible reaction in which hydroxymethyl group from 5,10-methylenetetrahydrofolate is transferred onto alpha-ketoisovalerate to form ketopantoate. The chain is 3-methyl-2-oxobutanoate hydroxymethyltransferase from Kosmotoga olearia (strain ATCC BAA-1733 / DSM 21960 / TBF 19.5.1).